A 341-amino-acid polypeptide reads, in one-letter code: Biotin synthase (341 aa).

One can recognise a Radical SAM core domain in the interval 53 to 272 (NHVETASLLS…IAVARIMMPK (220 aa)). Residues Cys68, Cys72, and Cys75 each coordinate [4Fe-4S] cluster. Positions 112, 143, 203, and 276 each coordinate [2Fe-2S] cluster.

This sequence belongs to the radical SAM superfamily. Biotin synthase family. In terms of assembly, homodimer. The cofactor is [4Fe-4S] cluster. Requires [2Fe-2S] cluster as cofactor.

It catalyses the reaction (4R,5S)-dethiobiotin + (sulfur carrier)-SH + 2 reduced [2Fe-2S]-[ferredoxin] + 2 S-adenosyl-L-methionine = (sulfur carrier)-H + biotin + 2 5'-deoxyadenosine + 2 L-methionine + 2 oxidized [2Fe-2S]-[ferredoxin]. The protein operates within cofactor biosynthesis; biotin biosynthesis; biotin from 7,8-diaminononanoate: step 2/2. In terms of biological role, catalyzes the conversion of dethiobiotin (DTB) to biotin by the insertion of a sulfur atom into dethiobiotin via a radical-based mechanism. The chain is Biotin synthase from Nitrobacter winogradskyi (strain ATCC 25391 / DSM 10237 / CIP 104748 / NCIMB 11846 / Nb-255).